Here is a 491-residue protein sequence, read N- to C-terminus: Cytochrome P450 2F2 (491 aa).

Residue cysteine 436 participates in heme binding.

The protein belongs to the cytochrome P450 family. Heme serves as cofactor. Club cells in lung and liver.

The protein resides in the endoplasmic reticulum membrane. It localises to the microsome membrane. In terms of biological role, involved in the regio- and stereoselective transformation of naphthalene to trans-1R-hydroxy-2R-glutathionyl-1,2-dihydronaphthalene in the presence of glutathione and glutathione S-transferases. It specifically catalyzes the production of a very reactive and potentially toxic intermediate, the 2R,2S arene oxide, that is associated with necrosis of the unciliated bronchiolar epithelial cells or club cells in lung. This Mus musculus (Mouse) protein is Cytochrome P450 2F2 (Cyp2f2).